The following is an 888-amino-acid chain: DNA mismatch repair protein MutS (888 aa).

Positions 249–271 (IGQRPPLSPPSREASGSTMAIDP) are disordered. Position 638–645 (638–645 (GPNMAGKS)) interacts with ATP.

This sequence belongs to the DNA mismatch repair MutS family.

This protein is involved in the repair of mismatches in DNA. It is possible that it carries out the mismatch recognition step. This protein has a weak ATPase activity. This chain is DNA mismatch repair protein MutS, found in Nitrobacter winogradskyi (strain ATCC 25391 / DSM 10237 / CIP 104748 / NCIMB 11846 / Nb-255).